The chain runs to 241 residues: Demethylmenaquinone methyltransferase (241 aa).

S-adenosyl-L-methionine-binding positions include T60, D81, and 106 to 107; that span reads DA.

The protein belongs to the class I-like SAM-binding methyltransferase superfamily. MenG/UbiE family.

The catalysed reaction is a 2-demethylmenaquinol + S-adenosyl-L-methionine = a menaquinol + S-adenosyl-L-homocysteine + H(+). It participates in quinol/quinone metabolism; menaquinone biosynthesis; menaquinol from 1,4-dihydroxy-2-naphthoate: step 2/2. Functionally, methyltransferase required for the conversion of demethylmenaquinol (DMKH2) to menaquinol (MKH2). This chain is Demethylmenaquinone methyltransferase, found in Staphylococcus aureus (strain MRSA252).